Reading from the N-terminus, the 306-residue chain is MPAKMHSNYPSDSETAELRDSTESGYVSGGSSEEYLPEIVFTKPHLQFLNRQLQFLEPQDVLRWCVTSLPHLYQTTAFGLTGLVIMDMLSKLSIPRPQMVNLIFLDTLHHFPETLKLVDNVRKRYPLQHIHVYKPQGVETEEEFAKKHGERLWEKDDQLYDWIAKVEPAQRAYRELNVHAVLTGRRRSQGGKRGDLDIIEVDEAGLIKINPLANWTFDQVKQYVKENDIPYNELLDKGYKSVGDYHSTSPVKENEDERSGRWKGQAKTECGIHNPRSKYAQYLMDMERKRQEEALSQALQNKLTTA.

2 disordered regions span residues 1 to 30 (MPAK…VSGG) and 245 to 266 (YHST…KGQA).

It belongs to the PAPS reductase family. CysH subfamily.

It carries out the reaction [thioredoxin]-disulfide + sulfite + adenosine 3',5'-bisphosphate + 2 H(+) = [thioredoxin]-dithiol + 3'-phosphoadenylyl sulfate. Its pathway is sulfur metabolism; hydrogen sulfide biosynthesis; sulfite from sulfate: step 3/3. Functionally, the NADP dependent reduction of PAPS into sulfite involves thioredoxin which probably plays the role of a thiol carrier. The sequence is that of Phosphoadenosine phosphosulfate reductase (sA) from Emericella nidulans (strain FGSC A4 / ATCC 38163 / CBS 112.46 / NRRL 194 / M139) (Aspergillus nidulans).